The primary structure comprises 103 residues: MQNQRIRIRLKAFDYKLIDASTAEIVETAKRTGAQVRGPIPLPTRKERFTVLISPHVNKKARDQYEIRTHKRLIDIVEPTDKTVDALMRLDLAAGVDVQISLG.

It belongs to the universal ribosomal protein uS10 family. In terms of assembly, part of the 30S ribosomal subunit.

In terms of biological role, involved in the binding of tRNA to the ribosomes. In Vibrio campbellii (strain ATCC BAA-1116), this protein is Small ribosomal subunit protein uS10.